Here is a 497-residue protein sequence, read N- to C-terminus: Intermediate filament protein A (497 aa).

The tract at residues 1 to 32 is coil 1A; it reads MSDLNDRLASYIEKVRFLEAQNRKLAADLDLL. The region spanning 1–342 is the IF rod domain; the sequence is MSDLNDRLAS…KMLEGEENRA (342 aa). Residues 33-46 are linker 1; sequence RGRWGKDTLSVRAM. The coil 1B stretch occupies residues 47–184; it reads YEGELQEARK…RVHDQEIAEL (138 aa). The segment at 185 to 202 is linker 12; sequence QAMASRDTTPENREYFKN. The segment at 203 to 342 is coil 2; it reads ELASAIRDIR…KMLEGEENRA (140 aa). A tail region spans residues 343-497; sequence GLRQLVEQVV…THIQRSSHTI (155 aa). The region spanning 375–493 is the LTD domain; that stretch reads SRTSFQRSAK…EERATHIQRS (119 aa).

It belongs to the intermediate filament family. In terms of assembly, a and B can form homopolymers. In terms of tissue distribution, giant body muscle cells.

The protein resides in the cytoplasm. This chain is Intermediate filament protein A, found in Ascaris suum (Pig roundworm).